The following is a 135-amino-acid chain: Meiotically up-regulated gene 116 protein (135 aa).

The helical transmembrane segment at 20–39 (YFHSFHCFFLLCFTVMLCVV) threads the bilayer. The interval 81–101 (QTPTKKGNKTKKKRKKEKKKE) is disordered. The span at 86-98 (KGNKTKKKRKKEK) shows a compositional bias: basic residues.

It is found in the mitochondrion membrane. In terms of biological role, has a role in meiosis. The chain is Meiotically up-regulated gene 116 protein (mug116) from Schizosaccharomyces pombe (strain 972 / ATCC 24843) (Fission yeast).